Consider the following 264-residue polypeptide: Glutamate racemase (264 aa).

Substrate contacts are provided by residues 10-11 and 42-43; these read DS and YG. Cys73 serves as the catalytic Proton donor/acceptor. 74–75 contacts substrate; that stretch reads NT. The Proton donor/acceptor role is filled by Cys183. Residue 184–185 participates in substrate binding; sequence TH.

The protein belongs to the aspartate/glutamate racemases family.

The enzyme catalyses L-glutamate = D-glutamate. Its pathway is cell wall biogenesis; peptidoglycan biosynthesis. Provides the (R)-glutamate required for cell wall biosynthesis. This Streptococcus gordonii (strain Challis / ATCC 35105 / BCRC 15272 / CH1 / DL1 / V288) protein is Glutamate racemase.